The sequence spans 246 residues: uncharacterized protein (246 aa).

Belongs to the IIV-6 170L family.

This is an uncharacterized protein from Acheta domesticus (House cricket).